We begin with the raw amino-acid sequence, 282 residues long: Bis(5'-nucleosyl)-tetraphosphatase, symmetrical (282 aa).

It belongs to the Ap4A hydrolase family.

It catalyses the reaction P(1),P(4)-bis(5'-adenosyl) tetraphosphate + H2O = 2 ADP + 2 H(+). Hydrolyzes diadenosine 5',5'''-P1,P4-tetraphosphate to yield ADP. The sequence is that of Bis(5'-nucleosyl)-tetraphosphatase, symmetrical from Klebsiella pneumoniae subsp. pneumoniae (strain ATCC 700721 / MGH 78578).